The sequence spans 607 residues: UvrABC system protein C (607 aa).

The region spanning 16-94 (GRPGVYRMFD…IKEWRPPYNI (79 aa)) is the GIY-YIG domain. A UVR domain is found at 203-238 (NALSDELNASMEKAAMALDFERAAELRDQVALLRRV).

Belongs to the UvrC family. Interacts with UvrB in an incision complex.

Its subcellular location is the cytoplasm. Functionally, the UvrABC repair system catalyzes the recognition and processing of DNA lesions. UvrC both incises the 5' and 3' sides of the lesion. The N-terminal half is responsible for the 3' incision and the C-terminal half is responsible for the 5' incision. This is UvrABC system protein C from Pseudomonas syringae pv. tomato (strain ATCC BAA-871 / DC3000).